The primary structure comprises 88 residues: UPF0250 protein Sputcn32_2874 (88 aa).

Belongs to the UPF0250 family.

This is UPF0250 protein Sputcn32_2874 from Shewanella putrefaciens (strain CN-32 / ATCC BAA-453).